Here is a 407-residue protein sequence, read N- to C-terminus: Argininosuccinate synthase (407 aa).

ATP-binding positions include 13-21 (AYSGGLDTS) and Ala-40. Residues Tyr-91 and Ser-96 each contribute to the L-citrulline site. Residue Gly-121 participates in ATP binding. Residues Thr-123, Asn-127, and Asp-128 each coordinate L-aspartate. Asn-127 provides a ligand contact to L-citrulline. L-citrulline-binding residues include Arg-131, Ser-182, Ser-191, Glu-267, and Tyr-279.

Belongs to the argininosuccinate synthase family. Type 1 subfamily. In terms of assembly, homotetramer.

The protein resides in the cytoplasm. It carries out the reaction L-citrulline + L-aspartate + ATP = 2-(N(omega)-L-arginino)succinate + AMP + diphosphate + H(+). It participates in amino-acid biosynthesis; L-arginine biosynthesis; L-arginine from L-ornithine and carbamoyl phosphate: step 2/3. This is Argininosuccinate synthase from Rhizobium etli (strain ATCC 51251 / DSM 11541 / JCM 21823 / NBRC 15573 / CFN 42).